A 297-amino-acid polypeptide reads, in one-letter code: 1D-myo-inositol 2-acetamido-2-deoxy-alpha-D-glucopyranoside deacetylase (297 aa).

Histidine 11, aspartate 14, and histidine 154 together coordinate Zn(2+).

It belongs to the MshB deacetylase family. Zn(2+) is required as a cofactor.

The catalysed reaction is 1D-myo-inositol 2-acetamido-2-deoxy-alpha-D-glucopyranoside + H2O = 1D-myo-inositol 2-amino-2-deoxy-alpha-D-glucopyranoside + acetate. Its function is as follows. Catalyzes the deacetylation of 1D-myo-inositol 2-acetamido-2-deoxy-alpha-D-glucopyranoside (GlcNAc-Ins) in the mycothiol biosynthesis pathway. The chain is 1D-myo-inositol 2-acetamido-2-deoxy-alpha-D-glucopyranoside deacetylase from Tsukamurella paurometabola (strain ATCC 8368 / DSM 20162 / CCUG 35730 / CIP 100753 / JCM 10117 / KCTC 9821 / NBRC 16120 / NCIMB 702349 / NCTC 13040) (Corynebacterium paurometabolum).